We begin with the raw amino-acid sequence, 211 residues long: Pyridoxine/pyridoxamine 5'-phosphate oxidase (211 aa).

Substrate is bound by residues 7 to 10 and K65; that span reads RREY. Residues 60–65, 75–76, R81, K82, and Q104 each bind FMN; these read RIVLLK and YT. Substrate contacts are provided by Y122, R126, and S130. Residues 139-140 and W184 contribute to the FMN site; that span reads QS. 190-192 serves as a coordination point for substrate; it reads RLH. R194 provides a ligand contact to FMN.

The protein belongs to the pyridoxamine 5'-phosphate oxidase family. Homodimer. FMN serves as cofactor.

It catalyses the reaction pyridoxamine 5'-phosphate + O2 + H2O = pyridoxal 5'-phosphate + H2O2 + NH4(+). It carries out the reaction pyridoxine 5'-phosphate + O2 = pyridoxal 5'-phosphate + H2O2. It participates in cofactor metabolism; pyridoxal 5'-phosphate salvage; pyridoxal 5'-phosphate from pyridoxamine 5'-phosphate: step 1/1. The protein operates within cofactor metabolism; pyridoxal 5'-phosphate salvage; pyridoxal 5'-phosphate from pyridoxine 5'-phosphate: step 1/1. Functionally, catalyzes the oxidation of either pyridoxine 5'-phosphate (PNP) or pyridoxamine 5'-phosphate (PMP) into pyridoxal 5'-phosphate (PLP). The sequence is that of Pyridoxine/pyridoxamine 5'-phosphate oxidase from Photobacterium profundum (strain SS9).